Reading from the N-terminus, the 313-residue chain is MRVVFVGTPEFAAEILRYMVKKGINIVGVVTQPDKPKGRGRKTLPTPVKVVAEEKGLPCIQPESINRKEALEFLHSVNPDVLIVASYGKILGEKVLSLPKHGCYNIHPSLLPKYRGASPIQRALENGEKKTGVTIYRMVKELDAGPIALQREVNIDPFETFDQLEKRLIELSKEMVIEFLEKLENGEIHLREQDHTRATYAPLIKKEDLFVDFSKGAETVKNKIRAYDSRPGARAFLNGKEVKLFGAMAVDSSNDEPGLIHYIDREGAWIGTGKGMVKVKYLQLPGKKKLTFWELRNGRLIEEGMKLEGRYES.

Residue 109–112 (SLLP) participates in (6S)-5,6,7,8-tetrahydrofolate binding.

The protein belongs to the Fmt family.

The enzyme catalyses L-methionyl-tRNA(fMet) + (6R)-10-formyltetrahydrofolate = N-formyl-L-methionyl-tRNA(fMet) + (6S)-5,6,7,8-tetrahydrofolate + H(+). Functionally, attaches a formyl group to the free amino group of methionyl-tRNA(fMet). The formyl group appears to play a dual role in the initiator identity of N-formylmethionyl-tRNA by promoting its recognition by IF2 and preventing the misappropriation of this tRNA by the elongation apparatus. The chain is Methionyl-tRNA formyltransferase from Thermotoga neapolitana (strain ATCC 49049 / DSM 4359 / NBRC 107923 / NS-E).